The following is a 146-amino-acid chain: uncharacterized protein (146 aa).

An HTH marR-type domain is found at 1–137 (MLSQEFFNSF…TINVMNQIHE (137 aa)).

This is an uncharacterized protein from Staphylococcus aureus (strain MRSA252).